A 142-amino-acid chain; its full sequence is Putative pre-16S rRNA nuclease (142 aa).

Belongs to the YqgF nuclease family.

Its subcellular location is the cytoplasm. Functionally, could be a nuclease involved in processing of the 5'-end of pre-16S rRNA. The sequence is that of Putative pre-16S rRNA nuclease from Photobacterium profundum (strain SS9).